A 438-amino-acid chain; its full sequence is Probable trafficking protein particle complex subunit 13 homolog (438 aa).

The protein belongs to the TRAPPC13 family.

This Drosophila melanogaster (Fruit fly) protein is Probable trafficking protein particle complex subunit 13 homolog.